A 156-amino-acid chain; its full sequence is Small ribosomal subunit protein uS7 (156 aa).

It belongs to the universal ribosomal protein uS7 family. In terms of assembly, part of the 30S ribosomal subunit. Contacts proteins S9 and S11.

In terms of biological role, one of the primary rRNA binding proteins, it binds directly to 16S rRNA where it nucleates assembly of the head domain of the 30S subunit. Is located at the subunit interface close to the decoding center, probably blocks exit of the E-site tRNA. The chain is Small ribosomal subunit protein uS7 from Rhodospirillum centenum (strain ATCC 51521 / SW).